Reading from the N-terminus, the 126-residue chain is Small ribosomal subunit protein uS13 (126 aa).

Residues 93 to 126 form a disordered region; it reads RRGLPVRGQRTKTNARTRKGPKRTVAGKKKAGRK.

The protein belongs to the universal ribosomal protein uS13 family. In terms of assembly, part of the 30S ribosomal subunit. Forms a loose heterodimer with protein S19. Forms two bridges to the 50S subunit in the 70S ribosome.

Its function is as follows. Located at the top of the head of the 30S subunit, it contacts several helices of the 16S rRNA. In the 70S ribosome it contacts the 23S rRNA (bridge B1a) and protein L5 of the 50S subunit (bridge B1b), connecting the 2 subunits; these bridges are implicated in subunit movement. Contacts the tRNAs in the A and P-sites. The sequence is that of Small ribosomal subunit protein uS13 from Beutenbergia cavernae (strain ATCC BAA-8 / DSM 12333 / CCUG 43141 / JCM 11478 / NBRC 16432 / NCIMB 13614 / HKI 0122).